The sequence spans 66 residues: uncharacterized protein (66 aa).

This is an uncharacterized protein from Saccharomyces cerevisiae (strain ATCC 204508 / S288c) (Baker's yeast).